Here is a 288-residue protein sequence, read N- to C-terminus: Thymidylate synthase (288 aa).

Arg21 is a binding site for dUMP. (6R)-5,10-methylene-5,6,7,8-tetrahydrofolate is bound at residue Asn51. Residue 150–151 coordinates dUMP; the sequence is RR. Cys170 functions as the Nucleophile in the catalytic mechanism. Residues 190-193, Asn201, and 231-233 contribute to the dUMP site; these read RSGD and HIY. Asp193 lines the (6R)-5,10-methylene-5,6,7,8-tetrahydrofolate pocket. Ala287 provides a ligand contact to (6R)-5,10-methylene-5,6,7,8-tetrahydrofolate.

Belongs to the thymidylate synthase family. Bacterial-type ThyA subfamily. Homodimer.

It localises to the cytoplasm. The catalysed reaction is dUMP + (6R)-5,10-methylene-5,6,7,8-tetrahydrofolate = 7,8-dihydrofolate + dTMP. It functions in the pathway pyrimidine metabolism; dTTP biosynthesis. Its function is as follows. Catalyzes the reductive methylation of 2'-deoxyuridine-5'-monophosphate (dUMP) to 2'-deoxythymidine-5'-monophosphate (dTMP) while utilizing 5,10-methylenetetrahydrofolate (mTHF) as the methyl donor and reductant in the reaction, yielding dihydrofolate (DHF) as a by-product. This enzymatic reaction provides an intracellular de novo source of dTMP, an essential precursor for DNA biosynthesis. The chain is Thymidylate synthase from Aster yellows witches'-broom phytoplasma (strain AYWB).